Here is a 60-residue protein sequence, read N- to C-terminus: Mastoparan-B (60 aa).

The N-terminal stretch at methionine 1–alanine 27 is a signal peptide. 4 AXPX repeats span residues alanine 27 to leucine 30, alanine 31 to leucine 34, alanine 35 to asparagine 38, and alanine 41 to glutamate 44. The propeptide occupies aspartate 28–alanine 45. Leucine 59 carries the leucine amide modification.

The protein belongs to the MCD family. Mastoparan subfamily. Expressed by the venom gland.

The protein localises to the secreted. It localises to the target cell membrane. In terms of biological role, antimicrobial and mast cell degranulating peptide. Has broad spectrum antibacterial activity against both Gram-positive (S.aureus MIC=96-128 ug/ml, S.xylosus MIC=2 ug/ml, S.alactolyticus MIC=32 ug/ml, and S.choleraesuis MIC=32 ug/ml) and Gram-negative bacteria (C.koseri MIC=6 ug/ml, E.coli MIC=3-16 ug/ml, K.pneumoniae MIC=128 ug/ml, P.aerugiosa MIC=128 ug/ml, S.typhimurium MIC=64 ug/ml, V.parahamelytics MIC=32 ug/ml, and S.enterica), as well as on fungi (C.albicans, C.glabrata, and C.neoformans). Does not show antimicrobial activity against S.mutans. Affects membrane permeability of E.coli. Also acts as a mast cell degranulating peptide, that causes liberation of histamine from rat peritoneal mast cells. Its mast cell degranulation activity may be related to the activation of G-protein coupled receptors in mast cells as well as interaction with other proteins located in cell endosomal membranes in the mast cells. Whether this peptide shows hemolytic activities is controversial, as Lin et al., 2011 and Ho et al., 1991 found a hemolytic activity on sheep, chicken and human erythrocytes, whereas Kim et al., 2016 found no hemolytic activity on human erythrocytes. In vivo, induces edema in the rat paw. In Vespa basalis (Hornet), this protein is Mastoparan-B.